A 154-amino-acid polypeptide reads, in one-letter code: Ascorbate-specific PTS system EIIA component (154 aa).

Positions 6–150 (SLAENKSIRL…QEVLDLIDRT (145 aa)) constitute a PTS EIIA type-2 domain. Catalysis depends on H68, which acts as the Tele-phosphohistidine intermediate. Residue H68 is modified to Phosphohistidine.

The protein localises to the cytoplasm. Functionally, the phosphoenolpyruvate-dependent sugar phosphotransferase system (sugar PTS), a major carbohydrate active transport system, catalyzes the phosphorylation of incoming sugar substrates concomitantly with their translocation across the cell membrane. The enzyme II UlaABC PTS system is involved in ascorbate transport. The polypeptide is Ascorbate-specific PTS system EIIA component (ulaC) (Shigella boydii serotype 4 (strain Sb227)).